A 180-amino-acid chain; its full sequence is Ribosome rescue factor SmrB (180 aa).

Residues 98-173 (LDLHGLTQLQ…GNAALLVLVA (76 aa)) form the Smr domain.

Belongs to the SmrB family. In terms of assembly, associates with collided ribosomes, but not with correctly translating polysomes.

Its function is as follows. Acts as a ribosome collision sensor. Detects stalled/collided disomes (pairs of ribosomes where the leading ribosome is stalled and a second ribosome has collided with it) and endonucleolytically cleaves mRNA at the 5' boundary of the stalled ribosome. Stalled/collided disomes form a new interface (primarily via the 30S subunits) that binds SmrB. Cleaved mRNA becomes available for tmRNA ligation, leading to ribosomal subunit dissociation and rescue of stalled ribosomes. The protein is Ribosome rescue factor SmrB of Pectobacterium carotovorum subsp. carotovorum (strain PC1).